A 628-amino-acid chain; its full sequence is (-)-beta-pinene synthase 1, chloroplastic (628 aa).

A chloroplast-targeting transit peptide spans 1–51; it reads MDLISVLPSASKSCVCLHKPLSSSTHKLKPFCRTIRILGMPRPRKSVLMVS. 3 residues coordinate Mg(2+): Asp-379, Asp-383, and Asp-531. Residues 379–383 carry the DDXXD motif motif; that stretch reads DDMYD.

It belongs to the terpene synthase family. Tpsd subfamily. Mg(2+) is required as a cofactor. The cofactor is Mn(2+).

It is found in the plastid. The protein resides in the chloroplast. It catalyses the reaction (2E)-geranyl diphosphate = (1S,5S)-beta-pinene + diphosphate. The catalysed reaction is (2E)-geranyl diphosphate = (1S,5S)-alpha-pinene + diphosphate. It participates in terpene metabolism; oleoresin biosynthesis. Its pathway is secondary metabolite biosynthesis; terpenoid biosynthesis. Monoterpene synthase (TPS) involved in the biosynthesis of monoterpene natural products included in conifer oleoresin secretions and volatile emissions; these compounds contribute to biotic and abiotic stress defense against herbivores and pathogens. Catalyzes the conversion of (2E)-geranyl diphosphate (GPP) to (-)-beta-pinene and, to a lower extent, to (-)-alpha-pinene. This chain is (-)-beta-pinene synthase 1, chloroplastic, found in Pinus banksiana (Jack pine).